The following is a 215-amino-acid chain: Hibernation-associated plasma protein HP-27 (215 aa).

The N-terminal stretch at 1-30 (MYEAGKRASFMGGAGIWILALSVLMHVVCS) is a signal peptide. A disordered region spans residues 34–79 (GNPESCNVPGPQGPPGMRGPPGTPGKPGPPGWNGFPGLPGPPGPPG). In terms of domain architecture, Collagen-like spans 43–81 (GPQGPPGMRGPPGTPGKPGPPGWNGFPGLPGPPGPPGMT). A compositionally biased stretch (pro residues) spans 44–63 (PQGPPGMRGPPGTPGKPGPP). The C1q domain maps to 85–215 (HSKGTSAFAV…VFSGFLIHEN (131 aa)). N155 is a glycosylation site (N-linked (GlcNAc...) asparagine).

Plasma; synthesized in the liver.

It is found in the secreted. Plasma proteins HP-20, HP-25, HP-27 and HP-55 form a 140 kDa complex via disulfide bonds in the plasma and are hibernation specific. The protein is Hibernation-associated plasma protein HP-27 of Tamias sibiricus (Siberian chipmunk).